Reading from the N-terminus, the 237-residue chain is Uridylate kinase (237 aa).

10–13 contributes to the ATP binding site; sequence KLSG. Residue G51 participates in UMP binding. ATP-binding residues include G52 and R56. Residues D71 and 133–140 contribute to the UMP site; that span reads TGNPCFTT. ATP-binding residues include T160, Y166, and D169.

It belongs to the UMP kinase family. As to quaternary structure, homohexamer.

The protein resides in the cytoplasm. The catalysed reaction is UMP + ATP = UDP + ADP. The protein operates within pyrimidine metabolism; CTP biosynthesis via de novo pathway; UDP from UMP (UMPK route): step 1/1. With respect to regulation, inhibited by UTP. Its function is as follows. Catalyzes the reversible phosphorylation of UMP to UDP. This Vesicomyosocius okutanii subsp. Calyptogena okutanii (strain HA) protein is Uridylate kinase.